The following is a 166-amino-acid chain: 16S rRNA aminocarboxypropyltransferase (166 aa).

S-adenosyl-L-methionine is bound by residues T17, V62, I84, Y99, and S103.

Belongs to the TDD superfamily. TSR3 family.

The protein localises to the cytoplasm. The enzyme catalyses an N(1)-methylpseudouridine in rRNA + S-adenosyl-L-methionine = N(1)-methyl-N(3)-[(3S)-3-amino-3-carboxypropyl]pseudouridine in rRNA + S-methyl-5'-thioadenosine + H(+). Functionally, aminocarboxypropyltransferase that catalyzes the aminocarboxypropyl transfer on pseudouridine corresponding to position 914 in M.jannaschii 16S rRNA. It constitutes the last step in biosynthesis of the hypermodified N1-methyl-N3-(3-amino-3-carboxypropyl) pseudouridine (m1acp3-Psi). This is 16S rRNA aminocarboxypropyltransferase from Saccharolobus solfataricus (strain ATCC 35092 / DSM 1617 / JCM 11322 / P2) (Sulfolobus solfataricus).